The sequence spans 1013 residues: Putative helicase mov-10-B.1 (1013 aa).

2 stretches are compositionally biased toward polar residues: residues 91–103 (QWSR…QNHA) and 113–123 (RPSTTRVSDPS). A disordered region spans residues 91 to 129 (QWSRPYRSQQNHATPHLNDAISRPSTTRVSDPSSVPEPE). An ATP-binding site is contributed by 550–557 (GPPGTGKT). The short motif at 672–675 (DEAG) is the DEAG box element.

This sequence belongs to the DNA2/NAM7 helicase family. SDE3 subfamily.

Its subcellular location is the cytoplasm. It localises to the P-body. The enzyme catalyses ATP + H2O = ADP + phosphate + H(+). In terms of biological role, probable RNA helicase. Required for RNA-mediated gene silencing by the RNA-induced silencing complex (RISC). Required for both miRNA-mediated translational repression and miRNA-mediated cleavage of complementary mRNAs by RISC. This is Putative helicase mov-10-B.1 (mov10b.1) from Danio rerio (Zebrafish).